A 390-amino-acid polypeptide reads, in one-letter code: Leu/Ile/Val-binding protein homolog 6 (390 aa).

A signal peptide spans 1 to 21 (MKKIALTALAVFSLAASAAYA).

Belongs to the leucine-binding protein family.

Functionally, component of an amino-acid transport system. The polypeptide is Leu/Ile/Val-binding protein homolog 6 (Brucella abortus (strain 2308)).